Reading from the N-terminus, the 485-residue chain is Homeobox protein unplugged (485 aa).

Disordered regions lie at residues 1-65 (MERP…QEQE), 114-157 (PAGH…DTRF), and 212-325 (GMAQ…RRTA). A compositionally biased stretch (acidic residues) spans 54–64 (RDQEQEAEQEQ). Residues 114-128 (PAGHPAAQQPQAQAQ) show a composition bias toward low complexity. 2 stretches are compositionally biased toward polar residues: residues 223-234 (QAHSSPAKSGSH) and 254-267 (DSCS…SPRN). Positions 284 to 293 (DSEDCSDDEG) are enriched in acidic residues. The segment covering 308–317 (SQGNGSSSNS) has biased composition (low complexity). Positions 319–378 (SRRRRTAFTSEQLLELEREFHAKKYLSLTERSQIATSLKLSEVQVKIWFQNRRAKWKRVK) form a DNA-binding region, homeobox.

As to expression, expressed in the neuroectodermal and mesectodermal cells at the ventral midline of stage 8 embryos, Subsequently, expression domains in the CNS widen and have their most anterior border in the posterior deutocerebrum. Oc/otd and unpg are mutual repressors at the interface of their brain-specific expression domains. Expression fades during germ band retraction and is then restricted to subset of cells by stage 14. Expressed in the founder cells of the cerebral branch within the first tracheal metamere. Outside the CNS, expression is seen in two clusters of ectodermal cells located laterally within the labial and first thoracic segments of stage 9 embryos. By stage 13, the expression is detected in a few cells close to the dorsal midline of the embryos.

The protein resides in the nucleus. In terms of biological role, plays a regulatory role in neural branching of the tracheae: segment-specific aspects of these neural branching patterns appear to be generated by homeotic regulation of expression. May have a role with oc/otd in the postembryonic development of the brain. The sequence is that of Homeobox protein unplugged from Drosophila melanogaster (Fruit fly).